The sequence spans 370 residues: Cysteine-type anaerobic sulfatase-maturating enzyme (370 aa).

In terms of domain architecture, Radical SAM core spans 1–227; that stretch reads MPPLSLLIKP…LKNLFDFWYE (227 aa). Residues Cys-15 and Cys-19 each contribute to the [4Fe-4S] cluster site. Tyr-21 is a binding site for S-adenosyl-L-methionine. Cys-22 is a [4Fe-4S] cluster binding site. Residues Gly-66, Ser-122, Arg-134, and Leu-195 each coordinate S-adenosyl-L-methionine. [4Fe-4S] cluster-binding residues include Cys-255, Cys-261, and Cys-276. Asp-277 acts as the Proton acceptor in catalysis. Cys-317, Cys-320, Cys-326, Cys-330, and Cys-348 together coordinate [4Fe-4S] cluster.

Belongs to the radical SAM superfamily. Anaerobic sulfatase-maturating enzyme family. Monomer. [4Fe-4S] cluster serves as cofactor.

The catalysed reaction is L-cysteinyl-[sulfatase] + S-adenosyl-L-methionine + H2O = 3-oxo-L-alanyl-[sulfatase] + hydrogen sulfide + 5'-deoxyadenosine + L-methionine + 2 H(+). Its pathway is protein modification; sulfatase oxidation. Functionally, involved in 'Cys-type' sulfatase maturation under anaerobic conditions. Catalyzes the post-translational modification of cysteine ('Cys-51' in the arylsulfatase CPF_0221) into 3-oxoalanine (also known as C(alpha)-formylglycine (FGly)), by a free radical chemical mechanism initiated via the reductive cleavage of S-adenosyl-L-methionine (SAM). Is also able to oxidize a serine residue in a synthetic substrate to FGly in vitro, and in a serine variant of a Cys-type sulfatase in vivo, but this activity is not physiological. Converts threonyl peptides to the corresponding ketone product, and also allo-threonyl peptides, but with a significantly reduced efficiency. This Clostridium perfringens (strain ATCC 13124 / DSM 756 / JCM 1290 / NCIMB 6125 / NCTC 8237 / Type A) protein is Cysteine-type anaerobic sulfatase-maturating enzyme.